A 410-amino-acid chain; its full sequence is Sulfate adenylyltransferase (410 aa).

It belongs to the sulfate adenylyltransferase family.

It carries out the reaction sulfate + ATP + H(+) = adenosine 5'-phosphosulfate + diphosphate. The protein operates within sulfur metabolism; hydrogen sulfide biosynthesis; sulfite from sulfate: step 1/3. The chain is Sulfate adenylyltransferase from Syntrophobacter fumaroxidans (strain DSM 10017 / MPOB).